The primary structure comprises 111 residues: uncharacterized protein (111 aa).

The signal sequence occupies residues methionine 1 to alanine 18.

This is an uncharacterized protein from Acidianus convivator (ATV).